The following is a 166-amino-acid chain: Lithostathine-1-beta (166 aa).

The first 22 residues, 1–22 (MAQTNSFFMLISSLMFLSLSQG), serve as a signal peptide directing secretion. O-linked (GalNAc...) threonine glycosylation is present at threonine 27. The C-type lectin domain maps to 34 to 164 (ISCPEGTNAY…EKKFSFVCKF (131 aa)). 3 cysteine pairs are disulfide-bonded: cysteine 36–cysteine 47, cysteine 64–cysteine 162, and cysteine 137–cysteine 154.

All O-linked glycans consist of Gal-GlcNAc-Gal-GalNAc tetrasaccharide core and get elongated (microheterogeneity).

The protein localises to the secreted. In terms of biological role, might act as an inhibitor of spontaneous calcium carbonate precipitation. May be associated with neuronal sprouting in brain, and with brain and pancreas regeneration. This chain is Lithostathine-1-beta (REG1B), found in Homo sapiens (Human).